A 130-amino-acid chain; its full sequence is Small ribosomal subunit protein uS9 (130 aa).

The protein belongs to the universal ribosomal protein uS9 family.

The polypeptide is Small ribosomal subunit protein uS9 (Exiguobacterium sp. (strain ATCC BAA-1283 / AT1b)).